Here is a 328-residue protein sequence, read N- to C-terminus: 4-hydroxy-3-methylbut-2-enyl diphosphate reductase (328 aa).

[4Fe-4S] cluster is bound at residue Cys-24. (2E)-4-hydroxy-3-methylbut-2-enyl diphosphate-binding residues include His-55 and His-88. Dimethylallyl diphosphate-binding residues include His-55 and His-88. The isopentenyl diphosphate site is built by His-55 and His-88. Cys-110 contributes to the [4Fe-4S] cluster binding site. His-138 serves as a coordination point for (2E)-4-hydroxy-3-methylbut-2-enyl diphosphate. Position 138 (His-138) interacts with dimethylallyl diphosphate. His-138 serves as a coordination point for isopentenyl diphosphate. Glu-140 functions as the Proton donor in the catalytic mechanism. Thr-178 serves as a coordination point for (2E)-4-hydroxy-3-methylbut-2-enyl diphosphate. Residue Cys-208 participates in [4Fe-4S] cluster binding. (2E)-4-hydroxy-3-methylbut-2-enyl diphosphate-binding residues include Ser-236, Ser-237, Asn-238, and Ser-279. Dimethylallyl diphosphate contacts are provided by Ser-236, Ser-237, Asn-238, and Ser-279. Isopentenyl diphosphate is bound by residues Ser-236, Ser-237, Asn-238, and Ser-279.

It belongs to the IspH family. Requires [4Fe-4S] cluster as cofactor.

The catalysed reaction is isopentenyl diphosphate + 2 oxidized [2Fe-2S]-[ferredoxin] + H2O = (2E)-4-hydroxy-3-methylbut-2-enyl diphosphate + 2 reduced [2Fe-2S]-[ferredoxin] + 2 H(+). It carries out the reaction dimethylallyl diphosphate + 2 oxidized [2Fe-2S]-[ferredoxin] + H2O = (2E)-4-hydroxy-3-methylbut-2-enyl diphosphate + 2 reduced [2Fe-2S]-[ferredoxin] + 2 H(+). Its pathway is isoprenoid biosynthesis; dimethylallyl diphosphate biosynthesis; dimethylallyl diphosphate from (2E)-4-hydroxy-3-methylbutenyl diphosphate: step 1/1. The protein operates within isoprenoid biosynthesis; isopentenyl diphosphate biosynthesis via DXP pathway; isopentenyl diphosphate from 1-deoxy-D-xylulose 5-phosphate: step 6/6. Functionally, catalyzes the conversion of 1-hydroxy-2-methyl-2-(E)-butenyl 4-diphosphate (HMBPP) into a mixture of isopentenyl diphosphate (IPP) and dimethylallyl diphosphate (DMAPP). Acts in the terminal step of the DOXP/MEP pathway for isoprenoid precursor biosynthesis. The protein is 4-hydroxy-3-methylbut-2-enyl diphosphate reductase of Ehrlichia ruminantium (strain Welgevonden).